A 146-amino-acid chain; its full sequence is Hemoglobin subunit beta (146 aa).

The residue at position 1 (valine 1) is an N-acetylvaline. A Globin domain is found at 2-146; the sequence is HLTGEEKAAV…VANALAHKYH (145 aa). A Phosphothreonine modification is found at threonine 12. Serine 44 is modified (phosphoserine). Position 59 is an N6-acetyllysine (lysine 59). Histidine 63 serves as a coordination point for heme b. Lysine 82 is modified (N6-acetyllysine). Histidine 92 provides a ligand contact to heme b. The residue at position 93 (cysteine 93) is an S-nitrosocysteine. N6-acetyllysine is present on lysine 144.

Belongs to the globin family. As to quaternary structure, heterotetramer of two alpha chains and two beta chains. In terms of tissue distribution, red blood cells.

In terms of biological role, involved in oxygen transport from the lung to the various peripheral tissues. This chain is Hemoglobin subunit beta (HBB), found in Martes foina (Beech marten).